The chain runs to 79 residues: Dolichyl-diphosphooligosaccharide--protein glycosyltransferase subunit DAD1 (79 aa).

The Lumenal segment spans residues 1–19 (AVATALIQVAYMGLVGSFP). Residues 20 to 40 (FNSFLSGVLSCIGTAVLAVCL) form a helical membrane-spanning segment. Residues 41-58 (RIQVNKDNKEFKDLPPER) lie on the Cytoplasmic side of the membrane. The helical transmembrane segment at 59–79 (AFADFVLCNLVLHLVIMNFLG) threads the bilayer.

The protein belongs to the DAD/OST2 family. Component of the oligosaccharyltransferase (OST) complex.

The protein resides in the endoplasmic reticulum membrane. It participates in protein modification; protein glycosylation. Subunit of the oligosaccharyl transferase (OST) complex that catalyzes the initial transfer of a defined glycan (Glc(3)Man(9)GlcNAc(2) in eukaryotes) from the lipid carrier dolichol-pyrophosphate to an asparagine residue within an Asn-X-Ser/Thr consensus motif in nascent polypeptide chains, the first step in protein N-glycosylation. N-glycosylation occurs cotranslationally and the complex associates with the Sec61 complex at the channel-forming translocon complex that mediates protein translocation across the endoplasmic reticulum (ER). All subunits are required for a maximal enzyme activity. The sequence is that of Dolichyl-diphosphooligosaccharide--protein glycosyltransferase subunit DAD1 (DAD1) from Zea mays (Maize).